We begin with the raw amino-acid sequence, 141 residues long: Hemoglobin subunit alpha-A (141 aa).

One can recognise a Globin domain in the interval 1 to 141; the sequence is VLSAADKTNV…VGAVLTAKYR (141 aa). H58 serves as a coordination point for O2. A heme b-binding site is contributed by H87.

Belongs to the globin family. Heterotetramer of two alpha chains and two beta chains. As to expression, red blood cells.

Involved in oxygen transport from the lung to the various peripheral tissues. The sequence is that of Hemoglobin subunit alpha-A (HBAA) from Cygnus olor (Mute swan).